The following is a 435-amino-acid chain: Probable histidine--tRNA ligase, cytoplasmic (435 aa).

This sequence belongs to the class-II aminoacyl-tRNA synthetase family.

It is found in the cytoplasm. The enzyme catalyses tRNA(His) + L-histidine + ATP = L-histidyl-tRNA(His) + AMP + diphosphate + H(+). The protein is Probable histidine--tRNA ligase, cytoplasmic of Encephalitozoon cuniculi (strain GB-M1) (Microsporidian parasite).